We begin with the raw amino-acid sequence, 718 residues long: Polyribonucleotide nucleotidyltransferase (718 aa).

Asp497 and Asp503 together coordinate Mg(2+). One can recognise a KH domain in the interval 564–623; the sequence is PRLLTMKIDPEQIGLVIGPGGKTIKGITEQTGSKIDIADDGTVTIAALEAEKAEKAKQII. The 69-residue stretch at 633–701 folds into the S1 motif domain; sequence GEVYMGRVTR…AKGRLNLTRL (69 aa).

The protein belongs to the polyribonucleotide nucleotidyltransferase family. Mg(2+) serves as cofactor.

It localises to the cytoplasm. The catalysed reaction is RNA(n+1) + phosphate = RNA(n) + a ribonucleoside 5'-diphosphate. Involved in mRNA degradation. Catalyzes the phosphorolysis of single-stranded polyribonucleotides processively in the 3'- to 5'-direction. The polypeptide is Polyribonucleotide nucleotidyltransferase (Rippkaea orientalis (strain PCC 8801 / RF-1) (Cyanothece sp. (strain PCC 8801))).